The chain runs to 188 residues: dCTP deaminase (188 aa).

Residues 111 to 116 (KSTYAR), 135 to 137 (TLE), Gln-156, Tyr-170, and Gln-180 contribute to the dCTP site. Catalysis depends on Glu-137, which acts as the Proton donor/acceptor.

It belongs to the dCTP deaminase family. As to quaternary structure, homotrimer.

The enzyme catalyses dCTP + H2O + H(+) = dUTP + NH4(+). It participates in pyrimidine metabolism; dUMP biosynthesis; dUMP from dCTP (dUTP route): step 1/2. In terms of biological role, catalyzes the deamination of dCTP to dUTP. This chain is dCTP deaminase, found in Aromatoleum aromaticum (strain DSM 19018 / LMG 30748 / EbN1) (Azoarcus sp. (strain EbN1)).